The primary structure comprises 2190 residues: Integrator complex subunit 1 (2190 aa).

A disordered region spans residues 1-61 (MNRAKPTTVR…GLPSERKRDA (61 aa)). S13 carries the phosphoserine modification. Polar residues predominate over residues 34-44 (GQANESKTAST). K47 carries the N6-acetyllysine modification. At T83 the chain carries Phosphothreonine. Phosphoserine is present on residues S87, S307, and S924. A disordered region spans residues 922 to 945 (AASGEEDDEGESKEQKAKKRQRQQ). Over residues 923–932 (ASGEEDDEGE) the composition is skewed to acidic residues. Residues 1159–1179 (TATMHILVVHAMVILLTLGPP) form a helical membrane-spanning segment. The disordered stretch occupies residues 1311-1334 (SLPPRRDSTEAPKPKSSPEQPIGQ). Residues 1314–1323 (PRRDSTEAPK) are compositionally biased toward basic and acidic residues. 4 positions are modified to phosphoserine: S1318, S1326, S1327, and S1395.

The protein belongs to the Integrator subunit 1 family. Component of the Integrator complex, composed of core subunits INTS1, INTS2, INTS3, INTS4, INTS5, INTS6, INTS7, INTS8, INTS9/RC74, INTS10, INTS11/CPSF3L, INTS12, INTS13, INTS14 and INTS15. The core complex associates with protein phosphatase 2A subunits PPP2CA and PPP2R1A, to form the Integrator-PP2A (INTAC) complex. Interacts with ESRRB, ESRRB is not a core component of the Integrator complex and this association is a bridge for the interaction with the multiprotein complex Integrator; attracts the transcriptional machinery.

It is found in the nucleus. The protein resides in the nucleus membrane. In terms of biological role, component of the integrator complex, a multiprotein complex that terminates RNA polymerase II (Pol II) transcription in the promoter-proximal region of genes. The integrator complex provides a quality checkpoint during transcription elongation by driving premature transcription termination of transcripts that are unfavorably configured for transcriptional elongation: the complex terminates transcription by (1) catalyzing dephosphorylation of the C-terminal domain (CTD) of Pol II subunit POLR2A/RPB1 and SUPT5H/SPT5, (2) degrading the exiting nascent RNA transcript via endonuclease activity and (3) promoting the release of Pol II from bound DNA. The integrator complex is also involved in terminating the synthesis of non-coding Pol II transcripts, such as enhancer RNAs (eRNAs), small nuclear RNAs (snRNAs), telomerase RNAs and long non-coding RNAs (lncRNAs). Within the integrator complex, INTS1 is involved in the post-termination step: INTS1 displaces INTS3 and the SOSS factors, allowing the integrator complex to return to the closed conformation, ready to bind to the paused elongation complex for another termination cycle. Mediates recruitment of cytoplasmic dynein to the nuclear envelope, probably as component of the integrator complex. In Homo sapiens (Human), this protein is Integrator complex subunit 1.